The primary structure comprises 147 residues: uncharacterized protein (147 aa).

4Fe-4S ferredoxin-type domains lie at 80–109 and 110–141; these read WYPK…AENG and KVVV…FPDE. Positions 89, 92, 95, 99, 119, 123, 126, and 130 each coordinate [4Fe-4S] cluster.

Requires [4Fe-4S] cluster as cofactor.

This is an uncharacterized protein from Methanocaldococcus jannaschii (strain ATCC 43067 / DSM 2661 / JAL-1 / JCM 10045 / NBRC 100440) (Methanococcus jannaschii).